A 142-amino-acid polypeptide reads, in one-letter code: Extracellular globin-1 (142 aa).

Positions 1-142 (ECLVTEGLKV…DQIIDGIKDI (142 aa)) constitute a Globin domain. Residues cysteine 2 and cysteine 131 are joined by a disulfide bond. Residue histidine 94 participates in heme b binding.

The protein belongs to the globin family. As to quaternary structure, the extracellular hemoglobin of the earthworm consists of 12 subunits that have a hexagonal bilayer structure with a molecular weight near 3.8 million. Each one-twelfth subunit is composed primarily of disulfide linked trimers (chains A, B, and C) and monomers (chain D).

The sequence is that of Extracellular globin-1 from Lumbricus terrestris (Common earthworm).